The following is a 90-amino-acid chain: Small ribosomal subunit protein bS18 (90 aa).

Residues 1 to 14 (MARDNGNKDRDGKR) show a composition bias toward basic and acidic residues. The interval 1–23 (MARDNGNKDRDGKRPNGGRNRKM) is disordered.

This sequence belongs to the bacterial ribosomal protein bS18 family. Part of the 30S ribosomal subunit. Forms a tight heterodimer with protein bS6.

Its function is as follows. Binds as a heterodimer with protein bS6 to the central domain of the 16S rRNA, where it helps stabilize the platform of the 30S subunit. This chain is Small ribosomal subunit protein bS18, found in Clostridium acetobutylicum (strain ATCC 824 / DSM 792 / JCM 1419 / IAM 19013 / LMG 5710 / NBRC 13948 / NRRL B-527 / VKM B-1787 / 2291 / W).